The following is a 432-amino-acid chain: Luc7-like protein 3 (432 aa).

Met-1 bears the N-acetylmethionine mark. Phosphoserine occurs at positions 3, 110, and 115. The stretch at 124–181 (KNEEKIQVLTDKIDVLLQQIEELGSEGKVEEAQGMMKLVEQLKEERELLRSTTSTIES) forms a coiled coil. An N6-acetyllysine modification is found at Lys-231. A compositionally biased stretch (basic and acidic residues) spans 234-287 (LRKRTEEPDRDERLKKEKQEREEREKEREREREERERKRRREEEEREKERARDR). The segment at 234-432 (LRKRTEEPDR…IKSEGDTQSN (199 aa)) is disordered. Residues 288-301 (ERRKRSRSRSRHSS) are compositionally biased toward basic residues. Positions 302-311 (RTSDRRCSRS) are enriched in basic and acidic residues. The span at 312 to 367 (RDHKRSRSRDRRRSRSRDRRRSRSHDRSERKHRSRSRDRRRSKSRDRKSYKHRSKS) shows a compositional bias: basic residues. A compositionally biased stretch (basic and acidic residues) spans 368–414 (RDREQDRKSKEKEKKGSDDKKSSVKSSSREKQSEDTNPESKESDTKN). Ser-420 carries the phosphoserine modification. Positions 421-432 (EDIKSEGDTQSN) are enriched in basic and acidic residues. A Glycyl lysine isopeptide (Lys-Gly) (interchain with G-Cter in SUMO1); alternate cross-link involves residue Lys-424. Residue Lys-424 forms a Glycyl lysine isopeptide (Lys-Gly) (interchain with G-Cter in SUMO2); alternate linkage. Residues Ser-425 and Ser-431 each carry the phosphoserine modification.

It belongs to the Luc7 family. As to quaternary structure, may interact with SFRS1 and form homodimers. Interacts with JMJD6. Interacts with RBM25. Interacts with RSRC1 (via Arg/Ser-rich domain). Interacts with RRP1B.

The protein resides in the nucleus speckle. Its function is as follows. Binds cAMP regulatory element DNA sequence. May play a role in RNA splicing. This is Luc7-like protein 3 (Luc7l3) from Mus musculus (Mouse).